The chain runs to 381 residues: Cytochrome b (381 aa).

4 helical membrane-spanning segments follow: residues 34–54 (FGSL…MLAM), 78–99 (WMIR…YLHI), 114–134 (WNTG…GYVL), and 179–199 (FFAL…VHLT). Residues histidine 84 and histidine 98 each contribute to the heme b site. Positions 183 and 197 each coordinate heme b. Residue histidine 202 participates in a ubiquinone binding. Helical transmembrane passes span 227 to 247 (MKDL…AFFT), 289 to 309 (LGGV…PLLH), 321 to 341 (MSQI…WVGS), and 348 to 368 (FIII…FLFP).

This sequence belongs to the cytochrome b family. In terms of assembly, the cytochrome bc1 complex contains 11 subunits: 3 respiratory subunits (MT-CYB, CYC1 and UQCRFS1), 2 core proteins (UQCRC1 and UQCRC2) and 6 low-molecular weight proteins (UQCRH/QCR6, UQCRB/QCR7, UQCRQ/QCR8, UQCR10/QCR9, UQCR11/QCR10 and a cleavage product of UQCRFS1). This cytochrome bc1 complex then forms a dimer. Heme b serves as cofactor.

The protein localises to the mitochondrion inner membrane. Component of the ubiquinol-cytochrome c reductase complex (complex III or cytochrome b-c1 complex) that is part of the mitochondrial respiratory chain. The b-c1 complex mediates electron transfer from ubiquinol to cytochrome c. Contributes to the generation of a proton gradient across the mitochondrial membrane that is then used for ATP synthesis. The protein is Cytochrome b (MT-CYB) of Nothoprocta perdicaria (Chilean tinamou).